Reading from the N-terminus, the 144-residue chain is Small ribosomal subunit protein uS19 (144 aa).

Belongs to the universal ribosomal protein uS19 family.

In terms of biological role, protein S19 forms a complex with S13 that binds strongly to the 16S ribosomal RNA. The protein is Small ribosomal subunit protein uS19 of Hyperthermus butylicus (strain DSM 5456 / JCM 9403 / PLM1-5).